The primary structure comprises 140 residues: 3-hydroxyacyl-[acyl-carrier-protein] dehydratase FabZ (140 aa).

The active site involves His-48.

This sequence belongs to the thioester dehydratase family. FabZ subfamily.

The protein localises to the cytoplasm. The catalysed reaction is a (3R)-hydroxyacyl-[ACP] = a (2E)-enoyl-[ACP] + H2O. Its function is as follows. Involved in unsaturated fatty acids biosynthesis. Catalyzes the dehydration of short chain beta-hydroxyacyl-ACPs and long chain saturated and unsaturated beta-hydroxyacyl-ACPs. The protein is 3-hydroxyacyl-[acyl-carrier-protein] dehydratase FabZ of Latilactobacillus sakei subsp. sakei (strain 23K) (Lactobacillus sakei subsp. sakei).